A 349-amino-acid polypeptide reads, in one-letter code: Core protein VP7 (349 aa).

Asparagine 287 carries N-linked (GlcNAc...) asparagine; by host glycosylation.

This sequence belongs to the orbivirus VP7 family. In terms of assembly, homotrimer that assemble in a complex of 260 capsomers on an inner scaffold composed of VP3.

Its subcellular location is the virion. In terms of biological role, the VP7 protein is one of the five proteins (with VP1, VP3, VP4, and VP6) which form the inner capsid of the virus. The sequence is that of Core protein VP7 (Segment-7) from Antilocapra americana (Pronghorn).